The following is a 270-amino-acid chain: Putative phosphoenolpyruvate synthase regulatory protein (270 aa).

ADP is bound at residue 151–158 (GVSRCGKT).

Belongs to the pyruvate, phosphate/water dikinase regulatory protein family. PSRP subfamily.

It carries out the reaction [pyruvate, water dikinase] + ADP = [pyruvate, water dikinase]-phosphate + AMP + H(+). The catalysed reaction is [pyruvate, water dikinase]-phosphate + phosphate + H(+) = [pyruvate, water dikinase] + diphosphate. Functionally, bifunctional serine/threonine kinase and phosphorylase involved in the regulation of the phosphoenolpyruvate synthase (PEPS) by catalyzing its phosphorylation/dephosphorylation. The protein is Putative phosphoenolpyruvate synthase regulatory protein of Methylobacillus flagellatus (strain ATCC 51484 / DSM 6875 / VKM B-1610 / KT).